Consider the following 323-residue polypeptide: uncharacterized protein (323 aa).

The protein belongs to the glycosyltransferase 2 family.

This is an uncharacterized protein from Haemophilus influenzae (strain ATCC 51907 / DSM 11121 / KW20 / Rd).